The sequence spans 197 residues: Phosphoheptose isomerase (197 aa).

The SIS domain occupies 36-197 (MVQCLVSEGK…IDQQLFGSTE (162 aa)). 51 to 53 (NGG) serves as a coordination point for substrate. Zn(2+) is bound by residues H60 and E64. Residues E64, 93–94 (ND), 119–121 (STS), S124, and Q174 contribute to the substrate site. Zn(2+) is bound by residues Q174 and H182.

The protein belongs to the SIS family. GmhA subfamily. Homotetramer. Zn(2+) serves as cofactor.

It is found in the cytoplasm. It carries out the reaction 2 D-sedoheptulose 7-phosphate = D-glycero-alpha-D-manno-heptose 7-phosphate + D-glycero-beta-D-manno-heptose 7-phosphate. It functions in the pathway carbohydrate biosynthesis; D-glycero-D-manno-heptose 7-phosphate biosynthesis; D-glycero-alpha-D-manno-heptose 7-phosphate and D-glycero-beta-D-manno-heptose 7-phosphate from sedoheptulose 7-phosphate: step 1/1. Catalyzes the isomerization of sedoheptulose 7-phosphate in D-glycero-D-manno-heptose 7-phosphate. The polypeptide is Phosphoheptose isomerase (Chromohalobacter salexigens (strain ATCC BAA-138 / DSM 3043 / CIP 106854 / NCIMB 13768 / 1H11)).